Consider the following 393-residue polypeptide: Chalcone synthase LF2 (393 aa).

Cys164 is a catalytic residue.

The protein belongs to the thiolase-like superfamily. Chalcone/stilbene synthases family.

It catalyses the reaction (E)-4-coumaroyl-CoA + 3 malonyl-CoA + 3 H(+) = 2',4,4',6'-tetrahydroxychalcone + 3 CO2 + 4 CoA. It participates in secondary metabolite biosynthesis; flavonoid biosynthesis. The primary product of this enzyme is 4,2',4',6'-tetrahydroxychalcone (also termed naringenin-chalcone or chalcone) which can under specific conditions spontaneously isomerize into naringenin. The polypeptide is Chalcone synthase LF2 (CHS-LF2) (Ipomoea batatas (Sweet potato)).